Here is a 152-residue protein sequence, read N- to C-terminus: Large ribosomal subunit protein bL9 (152 aa).

It belongs to the bacterial ribosomal protein bL9 family.

In terms of biological role, binds to the 23S rRNA. The polypeptide is Large ribosomal subunit protein bL9 (Saccharophagus degradans (strain 2-40 / ATCC 43961 / DSM 17024)).